Here is a 92-residue protein sequence, read N- to C-terminus: Small ribosomal subunit protein uS19 (92 aa).

Belongs to the universal ribosomal protein uS19 family.

Protein S19 forms a complex with S13 that binds strongly to the 16S ribosomal RNA. The sequence is that of Small ribosomal subunit protein uS19 from Agrobacterium fabrum (strain C58 / ATCC 33970) (Agrobacterium tumefaciens (strain C58)).